Here is a 230-residue protein sequence, read N- to C-terminus: Demethylmenaquinone methyltransferase (230 aa).

S-adenosyl-L-methionine contacts are provided by residues Thr57, Asp77, 101 to 102 (DI), and Ser118.

The protein belongs to the class I-like SAM-binding methyltransferase superfamily. MenG/UbiE family.

The enzyme catalyses a 2-demethylmenaquinol + S-adenosyl-L-methionine = a menaquinol + S-adenosyl-L-homocysteine + H(+). The protein operates within quinol/quinone metabolism; menaquinone biosynthesis; menaquinol from 1,4-dihydroxy-2-naphthoate: step 2/2. Functionally, methyltransferase required for the conversion of demethylmenaquinol (DMKH2) to menaquinol (MKH2). The polypeptide is Demethylmenaquinone methyltransferase (Chlamydia caviae (strain ATCC VR-813 / DSM 19441 / 03DC25 / GPIC) (Chlamydophila caviae)).